A 502-amino-acid chain; its full sequence is Protein Dok-7 (502 aa).

The 106-residue stretch at Ser-4–Gly-109 folds into the PH domain. Residues Arg-105–Phe-210 enclose the IRS-type PTB domain. Disordered regions lie at residues Phe-210–His-232, Ser-249–Ser-279, Thr-291–Ser-358, and Glu-418–Gly-482. Composition is skewed to low complexity over residues Ile-264–Ser-279 and Ala-301–Ser-316. The segment covering Gly-336–Ala-346 has biased composition (polar residues). Residues Thr-347–Ser-358 are compositionally biased toward low complexity. Residues Pro-459–Ser-473 are compositionally biased toward basic and acidic residues.

It localises to the cell membrane. Its subcellular location is the synapse. In terms of biological role, probable muscle-intrinsic activator of MUSK that plays an essential role in neuromuscular synaptogenesis. Acts in aneural activation of MUSK and subsequent acetylcholine receptor (AchR) clustering in myotubes. This Takifugu rubripes (Japanese pufferfish) protein is Protein Dok-7 (dok7).